The primary structure comprises 282 residues: Ribosomal RNA small subunit methyltransferase A (282 aa).

Positions 28, 30, 55, 77, 103, and 122 each coordinate S-adenosyl-L-methionine.

The protein belongs to the class I-like SAM-binding methyltransferase superfamily. rRNA adenine N(6)-methyltransferase family. RsmA subfamily.

It localises to the cytoplasm. It catalyses the reaction adenosine(1518)/adenosine(1519) in 16S rRNA + 4 S-adenosyl-L-methionine = N(6)-dimethyladenosine(1518)/N(6)-dimethyladenosine(1519) in 16S rRNA + 4 S-adenosyl-L-homocysteine + 4 H(+). Specifically dimethylates two adjacent adenosines (A1518 and A1519) in the loop of a conserved hairpin near the 3'-end of 16S rRNA in the 30S particle. May play a critical role in biogenesis of 30S subunits. In Paracoccus denitrificans (strain Pd 1222), this protein is Ribosomal RNA small subunit methyltransferase A.